A 103-amino-acid chain; its full sequence is Integration host factor subunit alpha (103 aa).

The protein belongs to the bacterial histone-like protein family. Heterodimer of an alpha and a beta chain.

This protein is one of the two subunits of integration host factor, a specific DNA-binding protein that functions in genetic recombination as well as in transcriptional and translational control. The protein is Integration host factor subunit alpha of Bartonella bacilliformis (strain ATCC 35685 / KC583 / Herrer 020/F12,63).